The following is a 542-amino-acid chain: Chaperonin GroEL (542 aa).

Residues 29-32, 86-90, Gly413, 477-479, and Asp493 each bind ATP; these read TIGP, DGTTT, and NAA.

The protein belongs to the chaperonin (HSP60) family. Forms a cylinder of 14 subunits composed of two heptameric rings stacked back-to-back. Interacts with the co-chaperonin GroES.

It is found in the cytoplasm. The catalysed reaction is ATP + H2O + a folded polypeptide = ADP + phosphate + an unfolded polypeptide.. Its function is as follows. Together with its co-chaperonin GroES, plays an essential role in assisting protein folding. The GroEL-GroES system forms a nano-cage that allows encapsulation of the non-native substrate proteins and provides a physical environment optimized to promote and accelerate protein folding. This is Chaperonin GroEL from Lactobacillus acidophilus (strain ATCC 700396 / NCK56 / N2 / NCFM).